We begin with the raw amino-acid sequence, 486 residues long: Ribosomal RNA small subunit methyltransferase F (486 aa).

Residues 124 to 130 (ASAPGSK), Glu148, Asp175, and Asp193 each bind S-adenosyl-L-methionine. Cys246 serves as the catalytic Nucleophile.

Belongs to the class I-like SAM-binding methyltransferase superfamily. RsmB/NOP family.

Its subcellular location is the cytoplasm. It carries out the reaction cytidine(1407) in 16S rRNA + S-adenosyl-L-methionine = 5-methylcytidine(1407) in 16S rRNA + S-adenosyl-L-homocysteine + H(+). Functionally, specifically methylates the cytosine at position 1407 (m5C1407) of 16S rRNA. The protein is Ribosomal RNA small subunit methyltransferase F of Shewanella baltica (strain OS195).